Reading from the N-terminus, the 310-residue chain is Glutaminase (310 aa).

Substrate is bound by residues serine 67, asparagine 118, glutamate 161, asparagine 168, tyrosine 192, tyrosine 244, and valine 262.

It belongs to the glutaminase family. As to quaternary structure, homotetramer.

The enzyme catalyses L-glutamine + H2O = L-glutamate + NH4(+). This Legionella pneumophila (strain Paris) protein is Glutaminase.